A 509-amino-acid polypeptide reads, in one-letter code: Scavenger receptor class B member 1 (509 aa).

At 1-11 (MGNLSRARRVT) the chain is on the cytoplasmic side. A helical membrane pass occupies residues 12 to 32 (AALGFIGLLFAVLGIIMIVMV). The Extracellular portion of the chain corresponds to 33–440 (PSIIKQQVLK…YIQLVLMPKV (408 aa)). N-linked (GlcNAc...) asparagine glycans are attached at residues asparagine 102, asparagine 108, asparagine 173, asparagine 212, asparagine 227, asparagine 255, asparagine 310, asparagine 330, and asparagine 383. A disulfide bridge links cysteine 251 with cysteine 384. A helical membrane pass occupies residues 441 to 461 (LHYAQYVLLALGCVLLLIPII). The Cytoplasmic portion of the chain corresponds to 462–509 (YQIRSQEKCYLFWISFKKGSKDKEAVQAYSEFLMTSAPKGTVLQEARL).

Belongs to the CD36 family. In terms of processing, N-glycosylated. Post-translationally, the six cysteines of the extracellular domain are all involved in intramolecular disulfide bonds.

It is found in the cell membrane. The protein localises to the membrane. It localises to the caveola. In terms of biological role, receptor for different ligands such as phospholipids, cholesterol ester, lipoproteins, phosphatidylserine and apoptotic cells. Receptor for HDL, mediating selective uptake of cholesteryl ether and HDL-dependent cholesterol efflux. Also facilitates the flux of free and esterified cholesterol between the cell surface and apoB-containing lipoproteins and modified lipoproteins, although less efficiently than HDL. May be involved in the phagocytosis of apoptotic cells, via its phosphatidylserine binding activity. The sequence is that of Scavenger receptor class B member 1 (SCARB1) from Bos taurus (Bovine).